Consider the following 156-residue polypeptide: Endoribonuclease YbeY (156 aa).

Zn(2+)-binding residues include His-122, His-126, and His-132.

The protein belongs to the endoribonuclease YbeY family. Zn(2+) serves as cofactor.

It localises to the cytoplasm. Functionally, single strand-specific metallo-endoribonuclease involved in late-stage 70S ribosome quality control and in maturation of the 3' terminus of the 16S rRNA. The polypeptide is Endoribonuclease YbeY (Bacillus cereus (strain ATCC 10987 / NRS 248)).